A 92-amino-acid chain; its full sequence is Integration host factor subunit beta (92 aa).

The protein belongs to the bacterial histone-like protein family. In terms of assembly, heterodimer of an alpha and a beta chain.

In terms of biological role, this protein is one of the two subunits of integration host factor, a specific DNA-binding protein that functions in genetic recombination as well as in transcriptional and translational control. This Bartonella tribocorum (strain CIP 105476 / IBS 506) protein is Integration host factor subunit beta.